The primary structure comprises 129 residues: Phosphoribosyl-AMP cyclohydrolase (129 aa).

Aspartate 79 provides a ligand contact to Mg(2+). Cysteine 80 is a binding site for Zn(2+). Mg(2+) is bound by residues aspartate 81 and aspartate 83. Cysteine 96 and cysteine 103 together coordinate Zn(2+).

This sequence belongs to the PRA-CH family. In terms of assembly, homodimer. Mg(2+) is required as a cofactor. It depends on Zn(2+) as a cofactor.

The protein localises to the cytoplasm. It catalyses the reaction 1-(5-phospho-beta-D-ribosyl)-5'-AMP + H2O = 1-(5-phospho-beta-D-ribosyl)-5-[(5-phospho-beta-D-ribosylamino)methylideneamino]imidazole-4-carboxamide. It participates in amino-acid biosynthesis; L-histidine biosynthesis; L-histidine from 5-phospho-alpha-D-ribose 1-diphosphate: step 3/9. Catalyzes the hydrolysis of the adenine ring of phosphoribosyl-AMP. The chain is Phosphoribosyl-AMP cyclohydrolase from Magnetococcus marinus (strain ATCC BAA-1437 / JCM 17883 / MC-1).